A 768-amino-acid polypeptide reads, in one-letter code: Ral guanine nucleotide dissociation stimulator-like 1 (768 aa).

The N-terminal Ras-GEF domain maps to 65–196; it reads KIRTIKAGTL…RAQNLLEQFQ (132 aa). Residues 232–501 enclose the Ras-GEF domain; the sequence is SEDLVAEQLT…YALSCEIEAA (270 aa). Ser520 is subject to Phosphoserine. Residues 528 to 623 form a disordered region; sequence MITSPTPTKE…PPSCNNNPKI (96 aa). Low complexity-rich tracts occupy residues 541–561, 586–596, and 605–621; these read STAS…SCES, ESSSSCSSIHS, and SSLI…NNNP. Residues 648–735 enclose the Ras-associating domain; that stretch reads DTCIIRISVE…FDFILRKKNS (88 aa).

Interacts with Ras. As to expression, expressed in a wide variety of tissues with strong expression being seen in the heart, brain, kidney, spleen and testis.

In terms of biological role, probable guanine nucleotide exchange factor. The polypeptide is Ral guanine nucleotide dissociation stimulator-like 1 (RGL1) (Homo sapiens (Human)).